Reading from the N-terminus, the 357-residue chain is CD4+ T-cell-stimulating antigen (357 aa).

The N-terminal stretch at 1–22 (MKKRTFALALSMIIASGVILGA) is a signal peptide. Cys-23 carries the N-palmitoyl cysteine lipid modification. Cys-23 carries the S-diacylglycerol cysteine lipid modification.

Belongs to the BMP lipoprotein family.

It localises to the cell membrane. In Listeria monocytogenes serovar 1/2a (strain ATCC BAA-679 / EGD-e), this protein is CD4+ T-cell-stimulating antigen (tcsA).